The following is a 98-amino-acid chain: NADH-ubiquinone oxidoreductase chain 4L (98 aa).

Transmembrane regions (helical) follow at residues 2–22 (PSIS…MLMF), 28–48 (SSLL…TLII), and 61–81 (IMLL…LVMV).

It belongs to the complex I subunit 4L family. Core subunit of respiratory chain NADH dehydrogenase (Complex I) which is composed of 45 different subunits.

Its subcellular location is the mitochondrion inner membrane. The catalysed reaction is a ubiquinone + NADH + 5 H(+)(in) = a ubiquinol + NAD(+) + 4 H(+)(out). Its function is as follows. Core subunit of the mitochondrial membrane respiratory chain NADH dehydrogenase (Complex I) which catalyzes electron transfer from NADH through the respiratory chain, using ubiquinone as an electron acceptor. Part of the enzyme membrane arm which is embedded in the lipid bilayer and involved in proton translocation. This is NADH-ubiquinone oxidoreductase chain 4L (MT-ND4L) from Allocebus trichotis (Hairy-eared dwarf lemur).